The chain runs to 241 residues: Proteasome subunit alpha type-5 (241 aa).

It belongs to the peptidase T1A family. The 26S proteasome consists of a 20S proteasome core and two 19S regulatory subunits. The 20S proteasome core is composed of 28 subunits that are arranged in four stacked rings, resulting in a barrel-shaped structure. The two end rings are each formed by seven alpha subunits, and the two central rings are each formed by seven beta subunits. The catalytic chamber with the active sites is on the inside of the barrel.

It is found in the cytoplasm. The protein localises to the nucleus. Functionally, the proteasome is a multicatalytic proteinase complex which is characterized by its ability to cleave peptides with Arg, Phe, Tyr, Leu, and Glu adjacent to the leaving group at neutral or slightly basic pH. The proteasome has an ATP-dependent proteolytic activity. The chain is Proteasome subunit alpha type-5 (psmA5) from Dictyostelium discoideum (Social amoeba).